Reading from the N-terminus, the 138-residue chain is Large ribosomal subunit protein uL16 (138 aa).

Residues 1–16 show a composition bias toward basic residues; it reads MLIPRRVKHRKQHHPS. Residues 1 to 25 are disordered; it reads MLIPRRVKHRKQHHPSRSGAAKGGT.

This sequence belongs to the universal ribosomal protein uL16 family. In terms of assembly, part of the 50S ribosomal subunit.

Functionally, binds 23S rRNA and is also seen to make contacts with the A and possibly P site tRNAs. The protein is Large ribosomal subunit protein uL16 of Rhodococcus jostii (strain RHA1).